The primary structure comprises 338 residues: Secretion system apparatus protein SsaL (338 aa).

This chain is Secretion system apparatus protein SsaL (ssaL), found in Salmonella typhimurium (strain LT2 / SGSC1412 / ATCC 700720).